The chain runs to 358 residues: Ethanol acetyltransferase 1 (358 aa).

Residues 59-166 (PIVFIHGLFG…NAPINQPHIS (108 aa)) form the AB hydrolase-1 domain. Residues Ser132, Asp156, and His305 each act as charge relay system in the active site.

Belongs to the AB hydrolase superfamily.

Its subcellular location is the mitochondrion. It carries out the reaction ethanol + acetyl-CoA = ethyl acetate + CoA. The enzyme catalyses acetyl-CoA + H2O = acetate + CoA + H(+). It catalyses the reaction ethyl acetate + H2O = ethanol + acetate + H(+). In terms of biological role, alcohol acetyltransferase that catalyzes the synthesis of ethyl acetate from ethanol and acetyl-CoA. Can also function as a thioesterase by hydrolyzing acetyl-CoA in the absence of ethanol, as well as esterase hydrolyzing ethyl acetate. This Eremothecium cymbalariae (strain CBS 270.75 / DBVPG 7215 / KCTC 17166 / NRRL Y-17582) (Yeast) protein is Ethanol acetyltransferase 1 (EAT1).